Reading from the N-terminus, the 128-residue chain is Cytochrome c' (128 aa).

Heme c contacts are provided by Gln-13, Gln-17, Glu-69, Thr-70, Cys-118, Cys-121, and His-122.

Homodimer. In terms of processing, binds 1 heme c group covalently per subunit.

Its function is as follows. Cytochrome c' is the most widely occurring bacterial c-type cytochrome. Cytochromes c' are high-spin proteins and the heme has no sixth ligand. Their exact function is not known. The protein is Cytochrome c' of Magnetospirillum molischianum (Rhodospirillum molischianum).